We begin with the raw amino-acid sequence, 156 residues long: Small ribosomal subunit protein uS7 (156 aa).

It belongs to the universal ribosomal protein uS7 family. In terms of assembly, part of the 30S ribosomal subunit. Contacts proteins S9 and S11.

Its function is as follows. One of the primary rRNA binding proteins, it binds directly to 16S rRNA where it nucleates assembly of the head domain of the 30S subunit. Is located at the subunit interface close to the decoding center, probably blocks exit of the E-site tRNA. The protein is Small ribosomal subunit protein uS7 of Synechococcus sp. (strain CC9605).